The sequence spans 215 residues: Cytidylate kinase (215 aa).

Gly11–Thr19 serves as a coordination point for ATP.

The protein belongs to the cytidylate kinase family. Type 1 subfamily.

Its subcellular location is the cytoplasm. The enzyme catalyses CMP + ATP = CDP + ADP. It carries out the reaction dCMP + ATP = dCDP + ADP. In Polynucleobacter necessarius subsp. necessarius (strain STIR1), this protein is Cytidylate kinase.